The sequence spans 219 residues: MTQQEMKKIAAQAALQFVKPDTIIGVGSGSTVNCFIDALASIKDEIKGAVAASKASEDQLRAMGIEVFNANEVAGLDVYIDGADEITPQGAMIKGGGAALTREKIVSSLAKQFICMVDSSKQVDVLGSSFPLPVEVIPMARSYVARQLVALGGSPEYREGVVTDNGNVILDVHNFNIYEPLKMEHTINNIAGVVTNGIFAQRYANIIIVGTAEGAKIIK.

Residues 28–31 (SGST), 81–84 (DGAD), and 94–97 (KGGG) contribute to the substrate site. The active-site Proton acceptor is the glutamate 103. Position 121 (lysine 121) interacts with substrate.

The protein belongs to the ribose 5-phosphate isomerase family. In terms of assembly, homodimer.

It catalyses the reaction aldehydo-D-ribose 5-phosphate = D-ribulose 5-phosphate. It functions in the pathway carbohydrate degradation; pentose phosphate pathway; D-ribose 5-phosphate from D-ribulose 5-phosphate (non-oxidative stage): step 1/1. Its function is as follows. Catalyzes the reversible conversion of ribose-5-phosphate to ribulose 5-phosphate. The chain is Ribose-5-phosphate isomerase A from Haemophilus ducreyi (strain 35000HP / ATCC 700724).